The following is a 1087-amino-acid chain: Apoptosis-stimulating of p53 protein 1 (1087 aa).

The interval 82–122 (HEDSPTESSEQGARQTQEQRTQRSVVNVPGEKRTENGVGNP) is disordered. Polar residues predominate over residues 87 to 106 (TESSEQGARQTQEQRTQRSV). 2 positions are modified to phosphoserine: serine 332 and serine 335. Disordered stretches follow at residues 374 to 415 (SSAA…GMEG), 442 to 721 (IGKG…PNIQ), and 734 to 878 (GMEG…TGHG). A compositionally biased stretch (polar residues) spans 393 to 405 (KQNSASVKSTQMT). A compositionally biased stretch (pro residues) spans 445–458 (GPPPIPGVGKPLPP). A compositionally biased stretch (low complexity) spans 459 to 476 (SYGTYPSSGPLGPGSTSS). The span at 506–520 (NAPQPGSSQQIQQRI) shows a compositional bias: polar residues. Residues 523 to 536 (PPSPTYPPAGPPAF) show a composition bias toward pro residues. Position 552 is an asymmetric dimethylarginine (arginine 552). The span at 570 to 589 (QTVNSSSIYSMYLQQATPPK) shows a compositional bias: polar residues. The segment covering 610-625 (PVLPSGSASPSPLPFL) has biased composition (low complexity). A phosphoserine mark is found at serine 679 and serine 708. A compositionally biased stretch (polar residues) spans 805 to 831 (PQTTHQTAEPTEDNNNNVAPVPSTEQI). 2 ANK repeats span residues 917–949 (EGIT…AADS) and 950–982 (DGWT…ASTI). An SH3 domain is found at 1016 to 1078 (MNKGTVYALW…PKNLLGLYPR (63 aa)).

The protein belongs to the ASPP family. In terms of assembly, interacts with P53/TP53; the interaction promotes pro-apoptotic activity.

The protein resides in the cytoplasm. The protein localises to the nucleus. Its function is as follows. Regulator that plays a central role in regulation of apoptosis via its interaction with p53/TP53. Regulates TP53 by enhancing the DNA binding and transactivation function of TP53 on the promoters of proapoptotic genes in vivo. The sequence is that of Apoptosis-stimulating of p53 protein 1 (Ppp1r13b) from Mus musculus (Mouse).